Reading from the N-terminus, the 584-residue chain is Protein DENND6A (584 aa).

The tract at residues 1–23 (MALWERGAGGAAEAGEDATEEPE) is disordered. The region spanning 39-218 (HCVCVVGFDL…KLRIPTYRDK (180 aa)) is the uDENN domain. One can recognise a cDENN domain in the interval 244-369 (EVDLFRCFCP…VKVKKLKNLK (126 aa)). Positions 371–504 (LDSKPGVYTS…RSRQKEMTQN (134 aa)) constitute a dDENN domain.

It belongs to the DENND6 family.

It is found in the recycling endosome. The protein localises to the cytoplasm. In terms of biological role, guanine nucleotide exchange factor (GEF) for RAB14. This chain is Protein DENND6A (DENND6A), found in Gallus gallus (Chicken).